The sequence spans 807 residues: Tyrosine-protein kinase receptor torso (807 aa).

The signal sequence occupies residues 1–28; that stretch reads MYSEGKLLKVFLIFAGFIIFSLCGEVVS. At 29-370 the chain is on the extracellular side; the sequence is QRYPPAPGLL…RAFTPGMLRW (342 aa). 4 disulfide bridges follow: Cys46–Cys61, Cys81–Cys203, Cys210–Cys239, and Cys259–Cys265. N-linked (GlcNAc...) asparagine glycosylation is found at Asn54, Asn171, Asn183, and Asn195. 3 N-linked (GlcNAc...) asparagine glycosylation sites follow: Asn307, Asn323, and Asn344. Residues 371 to 391 traverse the membrane as a helical segment; it reads VWAGATAGAGCAAGGLLAATL. Topologically, residues 392 to 807 are cytoplasmic; that stretch reads LCCGHRRATS…SPPVIQTKTA (416 aa). One can recognise a Protein kinase domain in the interval 439–738; the sequence is VLLHEVIGEG…PTFPELHQKL (300 aa). Residues 445–453 and Lys468 contribute to the ATP site; that span reads IGEGAFGVV. The active-site Proton acceptor is the Asp607.

The protein belongs to the protein kinase superfamily. Tyr protein kinase family. In terms of assembly, homodimer; disulfide-linked. The cofactor is Mg(2+). Post-translationally, may be auto-phosphorylated on tyrosine residues. At least one of the 3 cysteine residues Cys-381, Cys-393 or Cys-394 is involved in the formation of interchain disulfide bonds. The disulfide bond sites in the extracellular region are not involved in homodimer formation.

The protein localises to the cell membrane. The enzyme catalyses L-tyrosyl-[protein] + ATP = O-phospho-L-tyrosyl-[protein] + ADP + H(+). Probable receptor tyrosine kinase. During postembryonic development, involved in the initiation of metamorphosis probably by inducing the production of ecdysone in response to prothoracicotropic hormone (PTTH). Binding to PTTH stimulates activation of canonical MAPK signaling leading to ERK phosphorylation. This chain is Tyrosine-protein kinase receptor torso, found in Bombyx mori (Silk moth).